We begin with the raw amino-acid sequence, 309 residues long: Malate dehydrogenase (309 aa).

Residues 9–14 and D33 each bind NAD(+); that span reads GAGFVG. Positions 82 and 88 each coordinate substrate. NAD(+)-binding positions include N95 and 118-120; that span reads VNN. Substrate is bound by residues N120 and R151. H175 acts as the Proton acceptor in catalysis.

Belongs to the LDH/MDH superfamily. MDH type 3 family. As to quaternary structure, homotetramer (active enzyme); homodimer and homotrimer at temperatures lower than 55 degrees Celsius (inactive forms).

The catalysed reaction is (S)-malate + NAD(+) = oxaloacetate + NADH + H(+). In terms of biological role, catalyzes the reversible oxidation of malate to oxaloacetate. This is Malate dehydrogenase from Chloroflexus aurantiacus (strain ATCC 29366 / DSM 635 / J-10-fl).